The sequence spans 351 residues: 7,8-didemethyl-8-hydroxy-5-deazariboflavin synthase (351 aa).

A Radical SAM core domain is found at 35 to 275 (ITYSKNAFIP…EDISIQVPPN (241 aa)). Residues C49, C53, and C56 each coordinate [4Fe-4S] cluster.

It belongs to the radical SAM superfamily. CofG family. In terms of assembly, consists of two subunits, CofG and CofH. Requires [4Fe-4S] cluster as cofactor.

It carries out the reaction 5-amino-5-(4-hydroxybenzyl)-6-(D-ribitylimino)-5,6-dihydrouracil + S-adenosyl-L-methionine = 7,8-didemethyl-8-hydroxy-5-deazariboflavin + 5'-deoxyadenosine + L-methionine + NH4(+) + H(+). Its pathway is cofactor biosynthesis; coenzyme F0 biosynthesis. Functionally, catalyzes the radical-mediated synthesis of 7,8-didemethyl-8-hydroxy-5-deazariboflavin from 5-amino-5-(4-hydroxybenzyl)-6-(D-ribitylimino)-5,6-dihydrouracil. In Methanococcus vannielii (strain ATCC 35089 / DSM 1224 / JCM 13029 / OCM 148 / SB), this protein is 7,8-didemethyl-8-hydroxy-5-deazariboflavin synthase.